The primary structure comprises 452 residues: cAMP-dependent protein kinase regulatory subunit (452 aa).

The interval Gln28–Phe212 is dimerization and phosphorylation. A disordered region spans residues Ile74–Pro163. Positions Met75–Phe84 are enriched in polar residues. Residues Ser95–Glu106 are compositionally biased toward basic and acidic residues. Ser173 is modified (phosphoserine). Residues Leu213–Asp330 and Val333–Ser451 contribute to the a nucleoside 3',5'-cyclic phosphate site. Residues Glu278, Arg287, Glu399, and Arg408 each coordinate 3',5'-cyclic AMP.

It belongs to the cAMP-dependent kinase regulatory chain family. In terms of assembly, tetramer, composed of 2 regulatory (R) and 2 catalytic (C) subunits. In the presence of cAMP it dissociates into 2 active monomeric C subunits and an R dimer.

The sequence is that of cAMP-dependent protein kinase regulatory subunit (PKAR) from Debaryomyces hansenii (strain ATCC 36239 / CBS 767 / BCRC 21394 / JCM 1990 / NBRC 0083 / IGC 2968) (Yeast).